The chain runs to 187 residues: Peptide deformylase (187 aa).

Fe cation-binding residues include Cys107 and His149. The active site involves Glu150. His153 contributes to the Fe cation binding site.

The protein belongs to the polypeptide deformylase family. Requires Fe(2+) as cofactor.

It carries out the reaction N-terminal N-formyl-L-methionyl-[peptide] + H2O = N-terminal L-methionyl-[peptide] + formate. Removes the formyl group from the N-terminal Met of newly synthesized proteins. Requires at least a dipeptide for an efficient rate of reaction. N-terminal L-methionine is a prerequisite for activity but the enzyme has broad specificity at other positions. The sequence is that of Peptide deformylase from Microchaete diplosiphon (Fremyella diplosiphon).